A 280-amino-acid polypeptide reads, in one-letter code: Undecaprenyl-diphosphatase (280 aa).

8 helical membrane-spanning segments follow: residues 2–22 (FIIE…TEWL), 45–65 (AFME…VVVI), 86–106 (WQLW…GLFL), 114–134 (FYNL…FIYL), 147–167 (LASL…LALF), 188–208 (SVVT…ASGW), 223–243 (GQIF…LVVI), and 255–275 (FTIF…YAAI).

Belongs to the UppP family.

It localises to the cell membrane. It catalyses the reaction di-trans,octa-cis-undecaprenyl diphosphate + H2O = di-trans,octa-cis-undecaprenyl phosphate + phosphate + H(+). Catalyzes the dephosphorylation of undecaprenyl diphosphate (UPP). Confers resistance to bacitracin. The polypeptide is Undecaprenyl-diphosphatase (Streptococcus sanguinis (strain SK36)).